Reading from the N-terminus, the 175-residue chain is Translation initiation factor IF-3 (175 aa).

The protein belongs to the IF-3 family. In terms of assembly, monomer.

Its subcellular location is the cytoplasm. Its function is as follows. IF-3 binds to the 30S ribosomal subunit and shifts the equilibrium between 70S ribosomes and their 50S and 30S subunits in favor of the free subunits, thus enhancing the availability of 30S subunits on which protein synthesis initiation begins. This Staphylococcus aureus (strain USA300) protein is Translation initiation factor IF-3.